A 130-amino-acid polypeptide reads, in one-letter code: Putative ankyrin repeat protein R886 (130 aa).

3 ANK repeats span residues 21–50, 54–83, and 85–113; these read NYDR…DITA, YGFT…SIIK, and DNLT…DIRY.

The sequence is that of Putative ankyrin repeat protein R886 from Acanthamoeba polyphaga (Amoeba).